The following is a 227-amino-acid chain: UPF0758 protein llmg_1515 (227 aa).

Residues 103–225 enclose the MPN domain; it reads QVLSSKEYGM…YYSFRERDSN (123 aa). His-174, His-176, and Asp-187 together coordinate Zn(2+). The JAMM motif signature appears at 174–187; it reads HNHPSGNLQPSQAD.

The protein belongs to the UPF0758 family.

The sequence is that of UPF0758 protein llmg_1515 from Lactococcus lactis subsp. cremoris (strain MG1363).